Consider the following 455-residue polypeptide: Tubulin alpha chain (455 aa).

Gln-11, Glu-77, Ser-145, Gly-149, Thr-150, Ser-184, Asn-211, and Asn-233 together coordinate GTP. Glu-77 serves as a coordination point for Mg(2+). The active site involves Glu-259.

The protein belongs to the tubulin family. As to quaternary structure, dimer of alpha and beta chains. A typical microtubule is a hollow water-filled tube with an outer diameter of 25 nm and an inner diameter of 15 nM. Alpha-beta heterodimers associate head-to-tail to form protofilaments running lengthwise along the microtubule wall with the beta-tubulin subunit facing the microtubule plus end conferring a structural polarity. Microtubules usually have 13 protofilaments but different protofilament numbers can be found in some organisms and specialized cells. It depends on Mg(2+) as a cofactor.

Its subcellular location is the cytoplasm. The protein resides in the cytoskeleton. It catalyses the reaction GTP + H2O = GDP + phosphate + H(+). Functionally, tubulin is the major constituent of microtubules, a cylinder consisting of laterally associated linear protofilaments composed of alpha- and beta-tubulin heterodimers. Microtubules grow by the addition of GTP-tubulin dimers to the microtubule end, where a stabilizing cap forms. Below the cap, tubulin dimers are in GDP-bound state, owing to GTPase activity of alpha-tubulin. The chain is Tubulin alpha chain from Entamoeba histolytica (strain ATCC 30459 / HM-1:IMSS / ABRM).